Reading from the N-terminus, the 188-residue chain is Inactive cysteine S-methyltransferase OspZ (188 aa).

Belongs to the NleE/OspZ family.

Its subcellular location is the secreted. It is found in the host cytoplasm. The protein localises to the host nucleus. Inactive effector protein: in contrast to other members of the family, does not have the ability to inhibit host cell NF-kappa-B activation. Probably lacks cysteine S-methyltransferase activity due to its inability to bind S-adenosyl-L-methionine at the C-terminus. The protein is Inactive cysteine S-methyltransferase OspZ of Shigella flexneri.